A 126-amino-acid polypeptide reads, in one-letter code: TFVAIKPDGVQRGLCGEVMKFIQPMKQHYLDLKDMPFYAGLCKYMSSGPVFAMVWEGEGIVKMMLGETNPADSKPGSIRGDFCINIGRNIIHGSDTVENAKMEVALWFKPEEFVTYTEKAKAWVYE.

The ATP site is built by Lys-6, Phe-37, Thr-68, Arg-79, and Asn-89. His-92 functions as the Pros-phosphohistidine intermediate in the catalytic mechanism.

This sequence belongs to the NDK family. Mg(2+) is required as a cofactor.

Its subcellular location is the cytoplasm. It localises to the nucleus. The protein resides in the cell projection. The protein localises to the lamellipodium. It is found in the ruffle. The catalysed reaction is a 2'-deoxyribonucleoside 5'-diphosphate + ATP = a 2'-deoxyribonucleoside 5'-triphosphate + ADP. It catalyses the reaction a ribonucleoside 5'-diphosphate + ATP = a ribonucleoside 5'-triphosphate + ADP. Major role in the synthesis of nucleoside triphosphates other than ATP. The sequence is that of Nucleoside diphosphate kinase B (nme2) from Merluccius capensis (Shallow-water Cape hake).